Reading from the N-terminus, the 379-residue chain is Zinc finger protein 883 (379 aa).

13 consecutive C2H2-type zinc fingers follow at residues 13–35 (YLCT…QKTH), 41–63 (YECK…QRIH), 69–91 (YECN…QRVH), 97–119 (YECN…ERIH), 125–147 (YPCN…HRIH), 153–175 (YECT…QGIH), 181–203 (YQCK…QRTH), 209–231 (YECN…QRIH), 237–259 (YECN…QRTH), 265–287 (YVCK…LKIH), 293–315 (YQCN…QRTH), 321–343 (YQCN…KRIH), and 349–371 (YQCT…QKTH).

It belongs to the krueppel C2H2-type zinc-finger protein family.

The protein resides in the nucleus. In terms of biological role, may be involved in transcriptional regulation. In Homo sapiens (Human), this protein is Zinc finger protein 883 (ZNF883).